The following is a 119-amino-acid chain: Flagellar transcriptional regulator FlhD (119 aa).

This sequence belongs to the FlhD family. In terms of assembly, homodimer; disulfide-linked. Forms a heterohexamer composed of two FlhC and four FlhD subunits. Each FlhC binds a FlhD dimer, forming a heterotrimer, and a hexamer assembles by dimerization of two heterotrimers.

The protein resides in the cytoplasm. Its function is as follows. Functions in complex with FlhC as a master transcriptional regulator that regulates transcription of several flagellar and non-flagellar operons by binding to their promoter region. Activates expression of class 2 flagellar genes, including fliA, which is a flagellum-specific sigma factor that turns on the class 3 genes. Also regulates genes whose products function in a variety of physiological pathways. The chain is Flagellar transcriptional regulator FlhD from Yersinia enterocolitica.